A 663-amino-acid polypeptide reads, in one-letter code: General transcription and DNA repair factor IIH subunit tcf-29 (663 aa).

BSD domains lie at 147–206 (WFED…RAYA) and 227–278 (ENGE…LSKK). Disordered regions lie at residues 452-491 (DSDG…QHVG) and 513-535 (HLTT…EERP). Positions 453–465 (SDGRGGIDLHRSI) are enriched in basic and acidic residues. Over residues 515–528 (TTTTTHGGSHTTTT) the composition is skewed to low complexity.

Belongs to the TFB1 family. As to quaternary structure, component of the 7-subunit TFIIH core complex composed of XPB/rad25, XPD/dnr-10, tcf-30/SSL1, tcf-29/TFB1, tcf-11/TFB2, tcf-14/TFB4 and rtf-1/TFB5, which is active in NER. The core complex associates with the 3-subunit CTD-kinase module TFIIK composed of div-66/cyclin H, prk-3/KIN28 and rtf-2/TFB3 to form the 10-subunit holoenzyme (holo-TFIIH) active in transcription.

The protein localises to the nucleus. Functionally, component of the general transcription and DNA repair factor IIH (TFIIH) core complex, which is involved in general and transcription-coupled nucleotide excision repair (NER) of damaged DNA and, when complexed to TFIIK, in RNA transcription by RNA polymerase II. In NER, TFIIH acts by opening DNA around the lesion to allow the excision of the damaged oligonucleotide and its replacement by a new DNA fragment. In transcription, TFIIH has an essential role in transcription initiation. When the pre-initiation complex (PIC) has been established, TFIIH is required for promoter opening and promoter escape. Phosphorylation of the C-terminal tail (CTD) of the largest subunit of RNA polymerase II by the kinase module TFIIK controls the initiation of transcription. The protein is General transcription and DNA repair factor IIH subunit tcf-29 (tcf-29) of Neurospora crassa (strain ATCC 24698 / 74-OR23-1A / CBS 708.71 / DSM 1257 / FGSC 987).